Reading from the N-terminus, the 448-residue chain is Glutamyl-tRNA reductase (448 aa).

Substrate is bound by residues 49–52 (TCNR), Ser109, 114–116 (ETQ), and Gln120. The active-site Nucleophile is Cys50. Residue 189-194 (GAGEMG) participates in NADP(+) binding.

It belongs to the glutamyl-tRNA reductase family. As to quaternary structure, homodimer.

It carries out the reaction (S)-4-amino-5-oxopentanoate + tRNA(Glu) + NADP(+) = L-glutamyl-tRNA(Glu) + NADPH + H(+). It participates in porphyrin-containing compound metabolism; protoporphyrin-IX biosynthesis; 5-aminolevulinate from L-glutamyl-tRNA(Glu): step 1/2. In terms of biological role, catalyzes the NADPH-dependent reduction of glutamyl-tRNA(Glu) to glutamate 1-semialdehyde (GSA). The sequence is that of Glutamyl-tRNA reductase from Staphylococcus epidermidis (strain ATCC 35984 / DSM 28319 / BCRC 17069 / CCUG 31568 / BM 3577 / RP62A).